The sequence spans 952 residues: Meiosis-specific coiled-coil domain-containing protein MEIOC (952 aa).

3 disordered regions span residues 1-23 (MEVR…EGLE), 609-629 (QAKP…LDGL), and 933-952 (VHES…TNKH). Positions 617–627 (YDPEEGPKHLD) are enriched in basic and acidic residues. Polar residues predominate over residues 936–952 (SINSSNPMNQRGETNKH).

In terms of assembly, interacts with YTHDC2; binds transcript that regulate the mitotic cell cycle inhibiting progression into metaphase, thereby allowing meiotic prophase to proceed normally. Interacts with RBM46. In terms of tissue distribution, expressed in fetal ovaries. Expressed in testis.

It is found in the cytoplasm. Its subcellular location is the nucleus. Is required for meiosis completion in both male and female germ cells. Confers stability to numerous meiotic mRNAs in gonads allowing proper initiation and progression into meiosis prophase I. The function may involve YTHDC2 and is independent of induction by retinoic acid (RA). Maintains an extended meiotic prophase I by properly promoting the transition from a mitotic to a meiotic cell cycle program by binding transcripts through its interaction with YTHDC2 that regulate the mitotic cell cycle. The protein is Meiosis-specific coiled-coil domain-containing protein MEIOC of Homo sapiens (Human).